The following is a 314-amino-acid chain: Oxidoreductase NAD-binding domain-containing protein 1 (314 aa).

The first 18 residues, 1–18 (MALVAGSAAYQVLRGVTG), serve as a signal peptide directing secretion. The 104-residue stretch at 63 to 166 (EIISPAKVCG…VGGEFCFDPQ (104 aa)) folds into the FAD-binding FR-type domain. 180–185 (GVGINP) is an NAD(+) binding site.

This chain is Oxidoreductase NAD-binding domain-containing protein 1 (oxnad1), found in Xenopus laevis (African clawed frog).